We begin with the raw amino-acid sequence, 256 residues long: Flap endonuclease Xni (256 aa).

Asp105 serves as a coordination point for Mg(2+). The 5'-3' exonuclease domain occupies 163-256 (RSQLIDYLAL…QFRIKKPDSE (94 aa)). Positions 172, 173, 181, 183, and 186 each coordinate K(+). The interaction with DNA stretch occupies residues 185 to 190 (GIGPKS).

This sequence belongs to the Xni family. Mg(2+) is required as a cofactor. Requires K(+) as cofactor.

In terms of biological role, has flap endonuclease activity. During DNA replication, flap endonucleases cleave the 5'-overhanging flap structure that is generated by displacement synthesis when DNA polymerase encounters the 5'-end of a downstream Okazaki fragment. This Shewanella pealeana (strain ATCC 700345 / ANG-SQ1) protein is Flap endonuclease Xni.